The primary structure comprises 251 residues: 5'-nucleotidase SurE (251 aa).

The a divalent metal cation site is built by Asp8, Asp9, Ser40, and Asn95.

This sequence belongs to the SurE nucleotidase family. It depends on a divalent metal cation as a cofactor.

It is found in the cytoplasm. It carries out the reaction a ribonucleoside 5'-phosphate + H2O = a ribonucleoside + phosphate. Nucleotidase that shows phosphatase activity on nucleoside 5'-monophosphates. In Lawsonia intracellularis (strain PHE/MN1-00), this protein is 5'-nucleotidase SurE.